The chain runs to 1253 residues: MNYIPTQTFYGRRWRPRPAYRPWRVPMQPAPPMVIPELQTPIVQAQQMQQLISAVSALTTKQNGKAPKKPKKKPQKAKAKKNEQQKKNENKKPPPKQKNPAKKKKPGKRERMCMKIENDCIFEVKLDGKVTGYACLVGDKVMKPAHVKGVIDNPDLAKLTYKKSSKYDLECAQIPVHMKSDASKYTHEKPEGHYNWHHGAVQYSGGRFTIPTGAGKPGDSGRPIFDNKGRVVAIVLGGANEGARTALSVVTWTKDMVTRYTPEGTEEWSAALMMCVLANVTFPCSEPACAPCCYEKQPEQTLRMLEDNVDRPGYYDLLEATMTCNNSARHRRSVTKHFNVYKATKPYLAYCADCGDGQFCYSPVAIEKIRDEASDGMIKIQVAAQIGINKGGTHEHNKIRYIAGHDMKEANRDSLQVHTSGVCAIRGTMGHFIVAYCPPGDELKVQFQDAESHTQACKVQYKHAPAPVGREKFTVRPHFGIEVPCTTYQLTTAPTEEEIDMHTPPDIPDITLLSQQSGNVKITAGGKTIRYNCTCGSGNVGTTSSDKTINSCKIAQCHAAVTNHDKWQYTSSFVPRADQLSRKGKVHVPFPLTNSTCRVPVARAPGVTYGKRELTVKLHPDHPTLLTYRSLGADPRPYEEWIDRYVERTIPVTEDGIEYRWGNNPPVRLWAQLTTEGKPHGWPHEIILYYYGLYPAATIAAVSAAGLAVVLSLLASCYMFATARRKCLTPYALTPGAVVPVTLGVLCCAPRAHAASFAESMAYLWDENQTLFWLELATPLAAIIILVCCLKNLLCCCKPLSFLVLVSLGTPVVKSYEHTATIPNVVGFPYKAHIERNGFSPMTLQLEVLGTSLEPTLNLEYITCEYKTVVPSPYIKCCGTSECRSMERPDYQCQVYTGVYPFMWGGAYCFCDTENTQLSEAYVDRSDVCKHDHAAAYKAHTAAMKATIRISYGNLNQTTTAFVNGEHTVTVGGSRFTFGPISTAWTPFDNKIVVYKNDVYNQDFPPYGSGQPGRFGDIQSRTVESKDLYANTALKLSRPSSGTVHVPYTQTPSGFKYWIKERGTSLNDKAPFGCVIKTNPVRAENCAVGNIPVSMDIPDTAFTRVIDAPAVTNLECQVAVCTHSSDFGGIATLTFKTDKPGKCAVHSHSNVATIQEAAVDIKTDGKITLHFSTASASPAFKVSVCSAKTTCMAACEPPKDHIVPYGASHNNQVFPDMSGTAMTWVQRVAGGLGGLTLAAVAVLILVTCVTMRR.

Residues valine 43–alanine 77 are host transcription inhibition. Residues leucine 58 to glutamate 110 are disordered. Basic residues predominate over residues alanine 66–alanine 79. The short motif at proline 70 to proline 106 is the Nuclear localization signal element. The span at lysine 80–lysine 92 shows a compositional bias: basic and acidic residues. The tract at residues asparagine 90 to isoleucine 121 is binding to the viral RNA. Basic residues predominate over residues proline 93–lysine 108. The interval proline 106–cysteine 120 is ribosome-binding. Cysteine 120 and cysteine 135 form a disulfide bridge. A Peptidase S3 domain is found at cysteine 120–tryptophan 268. Histidine 146 acts as the Charge relay system in catalysis. The Nuclear export signal motif lies at isoleucine 151–tyrosine 161. Residues lysine 162–tyrosine 167 form an interaction with spike glycoprotein E2 region. Aspartate 168 serves as the catalytic Charge relay system. Residues proline 190–alanine 200 form a dimerization of the capsid protein region. The active-site Charge relay system is serine 220. The interval aspartate 226–arginine 230 is dimerization of the capsid protein. The tract at residues serine 269–valine 280 is functions as an uncleaved signal peptide for the precursor of protein E3/E2. Intrachain disulfides connect cysteine 275–cysteine 284, cysteine 289–cysteine 293, and cysteine 292–cysteine 324. N-linked (GlcNAc...) asparagine; by host glycosylation occurs at asparagine 279. Asparagine 325 is a glycosylation site (N-linked (GlcNAc...) asparagine; by host). Over serine 333–tyrosine 694 the chain is Extracellular. Cystine bridges form between cysteine 351-cysteine 457, cysteine 354-cysteine 360, cysteine 423-cysteine 437, cysteine 485-cysteine 597, cysteine 533-cysteine 557, and cysteine 535-cysteine 552. 2 interaction with host Mxra8 receptor regions span residues glutamine 358–tyrosine 361 and histidine 394–histidine 396. Residues glutamine 516–asparagine 519 form an interaction with host Mxra8 receptor region. A glycan (N-linked (GlcNAc...) asparagine; by host) is linked at asparagine 532. Positions threonine 548–isoleucine 554 are interaction with host Mxra8 receptor. The N-linked (GlcNAc...) asparagine; by host glycan is linked to asparagine 594. A helical membrane pass occupies residues proline 695–alanine 715. Over serine 716–alanine 754 the chain is Cytoplasmic. Cysteine 717 carries the S-stearoyl cysteine; by host lipid modification. The tract at residues threonine 722–lysine 726 is interaction with the capsid protein. Cysteine 727 carries S-stearoyl cysteine; by host lipidation. The tract at residues cysteine 727–cysteine 747 is transient transmembrane before p62-6K protein processing. Cysteine 727 and cysteine 748 form a disulfide bridge. S-palmitoyl cysteine; by host attachment occurs at residues cysteine 747 and cysteine 748. Residues alanine 755–glutamine 769 lie on the Extracellular side of the membrane. N-linked (GlcNAc...) asparagine; by host glycosylation occurs at asparagine 768. The chain crosses the membrane as a helical span at residues threonine 770–leucine 790. Residues lysine 791–asparagine 792 are Cytoplasmic-facing. The helical transmembrane segment at leucine 793–valine 813 threads the bilayer. Extracellular segments follow at residues lysine 814–serine 815 and valine 826–arginine 1227. Cystine bridges form between cysteine 864–cysteine 929, cysteine 877–cysteine 909, cysteine 878–cysteine 911, and cysteine 883–cysteine 893. Positions valine 899–threonine 916 are E1 fusion peptide loop. Residues asparagine 956 and asparagine 1085 are each glycosylated (N-linked (GlcNAc...) asparagine; by host). 4 cysteine pairs are disulfide-bonded: cysteine 1074–cysteine 1086, cysteine 1116–cysteine 1191, cysteine 1121–cysteine 1195, and cysteine 1143–cysteine 1185. Residues valine 1228–cysteine 1248 traverse the membrane as a helical segment. The S-palmitoyl cysteine; by host moiety is linked to residue cysteine 1248. Topologically, residues valine 1249–arginine 1253 are cytoplasmic.

In terms of assembly, homodimer. Homomultimer. Interacts with host karyopherin KPNA4; this interaction allows the nuclear import of the viral capsid protein. Interacts with spike glycoprotein E2. Interacts with host IRAK1; the interaction leads to inhibition of IRAK1-dependent signaling. The precursor of protein E3/E2 and E1 form a heterodimer shortly after synthesis. As to quaternary structure, interacts with spike glycoprotein E2. The precursor of protein E3/E2 and E1 form a heterodimer shortly after synthesis. Processing of the precursor of protein E3/E2 into E2 and E3 results in a heterodimer of the spike glycoproteins E2 and E1. Spike at virion surface are constituted of a trimer of E2-E1 heterodimers. After target cell attachment and endocytosis, E1 change conformation to form homotrimers. Interacts with 6K protein. E1/E2 heterodimer interacts with host LDLR. In terms of assembly, interacts with spike glycoprotein E1. Processing of the precursor of protein E3/E2 into E2 and E3 results in a heterodimer of the spike glycoproteins E2 and E1. Spike at virion surface are constituted of a trimer of E2-E1 heterodimers. Interacts with 6K protein. Interacts with host MXRA8; this interaction mediates virus entry. Oligomer. Interacts with spike glycoprotein E1. Interacts with spike glycoprotein E2. In terms of processing, structural polyprotein: Specific enzymatic cleavages in vivo yield mature proteins. Capsid protein is auto-cleaved during polyprotein translation, unmasking a signal peptide at the N-terminus of the precursor of E3/E2. The remaining polyprotein is then targeted to the host endoplasmic reticulum, where host signal peptidase cleaves it into pE2, 6K and E1 proteins. pE2 is further processed to mature E3 and E2 by host furin in trans-Golgi vesicle. Post-translationally, palmitoylated via thioester bonds. These palmitoylations may induce disruption of the C-terminus transmembrane. This would result in the reorientation of E2 C-terminus from lumenal to cytoplasmic side. N-glycosylated. In terms of processing, palmitoylated via thioester bonds.

Its subcellular location is the virion. The protein localises to the host cytoplasm. It is found in the host cell membrane. It localises to the host nucleus. The protein resides in the virion membrane. Its subcellular location is the host Golgi apparatus. The protein localises to the host trans-Golgi network. It is found in the host endoplasmic reticulum. The enzyme catalyses Autocatalytic release of the core protein from the N-terminus of the togavirus structural polyprotein by hydrolysis of a -Trp-|-Ser- bond.. Functionally, forms an icosahedral capsid with a T=4 symmetry composed of 240 copies of the capsid protein surrounded by a lipid membrane through which penetrate 80 spikes composed of trimers of E1-E2 heterodimers. The capsid protein binds to the viral RNA genome at a site adjacent to a ribosome binding site for viral genome translation following genome release. Possesses a protease activity that results in its autocatalytic cleavage from the nascent structural protein. Following its self-cleavage, the capsid protein transiently associates with ribosomes, and within several minutes the protein binds to viral RNA and rapidly assembles into icosahedric core particles. The resulting nucleocapsid eventually associates with the cytoplasmic domain of the spike glycoprotein E2 at the cell membrane, leading to budding and formation of mature virions. In case of infection, new virions attach to target cells and after clathrin-mediated endocytosis their membrane fuses with the host endosomal membrane. This leads to the release of the nucleocapsid into the cytoplasm, followed by an uncoating event necessary for the genomic RNA to become accessible. The uncoating might be triggered by the interaction of capsid proteins with ribosomes. Binding of ribosomes would release the genomic RNA since the same region is genomic RNA-binding and ribosome-binding. Specifically inhibits interleukin-1 receptor-associated kinase 1/IRAK1-dependent signaling during viral entry, representing a means by which the alphaviruses may evade innate immune detection and activation prior to viral gene expression. Its function is as follows. Provides the signal sequence for the translocation of the precursor of protein E3/E2 to the host endoplasmic reticulum. Furin-cleaved E3 remains associated with spike glycoprotein E1 and mediates pH protection of the latter during the transport via the secretory pathway. After virion release from the host cell, the assembly protein E3 is gradually released in the extracellular space. Plays a role in viral attachment to target host cell, by binding to the cell receptor MXRA8. The host LDLR may also act as a cell receptor for viral entry. Synthesized as a p62 precursor which is processed by furin at the cell membrane just before virion budding, giving rise to E2-E1 heterodimer. The p62-E1 heterodimer is stable, whereas E2-E1 is unstable and dissociate at low pH. p62 is processed at the last step, presumably to avoid E1 fusion activation before its final export to cell surface. E2 C-terminus contains a transitory transmembrane that would be disrupted by palmitoylation, resulting in reorientation of the C-terminal tail from lumenal to cytoplasmic side. This step is critical since E2 C-terminus is involved in budding by interacting with capsid proteins. This release of E2 C-terminus in cytoplasm occurs lately in protein export, and precludes premature assembly of particles at the endoplasmic reticulum membrane. In terms of biological role, acts as a viroporin that participates in virus glycoprotein processing and transport to the plasma membrane, cell permeabilization and budding of viral particles. Disrupts the calcium homeostasis of the cell, probably at the endoplasmic reticulum level. This leads to cytoplasmic calcium elevation. Because of its lipophilic properties, the 6K protein is postulated to influence the selection of lipids that interact with the transmembrane domains of the glycoproteins, which, in turn, affects the deformability of the bilayer required for the extreme curvature that occurs as budding proceeds. Present in low amount in virions, about 3% compared to viral glycoproteins. Functionally, class II viral fusion protein. Fusion activity is inactive as long as E1 is bound to E2 in mature virion. After virus attachment to target cell via host MXRA8 and endocytosis, acidification of the endosome induce dissociation of E1/E2 heterodimer and concomitant trimerization of the E1 subunits. This E1 trimer is fusion active, and promotes release of viral nucleocapsid in cytoplasm after endosome and viral membrane fusion. Efficient fusion requires the presence of cholesterol and sphingolipid in the target membrane. The chain is Structural polyprotein from Aedes vexans (Inland floodwater mosquito).